Reading from the N-terminus, the 209-residue chain is Imidazoleglycerol-phosphate dehydratase (209 aa).

Belongs to the imidazoleglycerol-phosphate dehydratase family.

The protein localises to the cytoplasm. The catalysed reaction is D-erythro-1-(imidazol-4-yl)glycerol 3-phosphate = 3-(imidazol-4-yl)-2-oxopropyl phosphate + H2O. It participates in amino-acid biosynthesis; L-histidine biosynthesis; L-histidine from 5-phospho-alpha-D-ribose 1-diphosphate: step 6/9. This Microcystis aeruginosa (strain NIES-843 / IAM M-2473) protein is Imidazoleglycerol-phosphate dehydratase.